The primary structure comprises 418 residues: 3-isopropylmalate dehydratase large subunit (418 aa).

Residues C299, C359, and C362 each contribute to the [4Fe-4S] cluster site.

It belongs to the aconitase/IPM isomerase family. LeuC type 2 subfamily. In terms of assembly, heterodimer of LeuC and LeuD. [4Fe-4S] cluster is required as a cofactor.

It carries out the reaction (2R,3S)-3-isopropylmalate = (2S)-2-isopropylmalate. The protein operates within amino-acid biosynthesis; L-leucine biosynthesis; L-leucine from 3-methyl-2-oxobutanoate: step 2/4. Catalyzes the isomerization between 2-isopropylmalate and 3-isopropylmalate, via the formation of 2-isopropylmaleate. The polypeptide is 3-isopropylmalate dehydratase large subunit (Nitratidesulfovibrio vulgaris (strain DSM 19637 / Miyazaki F) (Desulfovibrio vulgaris)).